A 138-amino-acid polypeptide reads, in one-letter code: uncharacterized protein (138 aa).

The next 3 membrane-spanning stretches (helical) occupy residues 8–28 (LIIQ…AFLP), 47–67 (FIIC…TIIV), and 82–102 (TLPV…IAFI).

To U.parvum UU007, UU008 and UU041.

Its subcellular location is the cell membrane. This is an uncharacterized protein from Ureaplasma parvum serovar 3 (strain ATCC 700970).